The sequence spans 564 residues: Juvenile hormone esterase (564 aa).

The N-terminal stretch at 1 to 19 is a signal peptide; that stretch reads MTSHVLALAFLLHACTALA. Residue Asn81 is glycosylated (N-linked (GlcNAc...) asparagine). A disulfide bridge links Cys89 with Cys109. The N-linked (GlcNAc...) asparagine glycan is linked to Asn180. Ser220 serves as the catalytic Acyl-ester intermediate. Glu351 (charge relay system) is an active-site residue. Asn402 carries an N-linked (GlcNAc...) asparagine glycan. His465 functions as the Charge relay system in the catalytic mechanism. Residue Asn515 is glycosylated (N-linked (GlcNAc...) asparagine).

It belongs to the type-B carboxylesterase/lipase family.

It catalyses the reaction juvenile hormone I + H2O = juvenile hormone I carboxylate + methanol + H(+). The catalysed reaction is juvenile hormone III + H2O = juvenile hormone III carboxylate + methanol + H(+). JH esterase plays a crucial role in the decrease of JH activity in lepidopteran insects, by hydrolyzing the methyl ester of JH. It is also involved in the transport of JH. The protein is Juvenile hormone esterase of Heliothis virescens (Tobacco budworm moth).